The chain runs to 92 residues: Small ribosomal subunit protein bS20 (92 aa).

The disordered stretch occupies residues 1–25 (MANSAQARKRARQAAKANSHNSALR).

The protein belongs to the bacterial ribosomal protein bS20 family.

Functionally, binds directly to 16S ribosomal RNA. This is Small ribosomal subunit protein bS20 from Paraburkholderia phymatum (strain DSM 17167 / CIP 108236 / LMG 21445 / STM815) (Burkholderia phymatum).